We begin with the raw amino-acid sequence, 227 residues long: Cytochrome c oxidase subunit 2 (227 aa).

The Mitochondrial intermembrane portion of the chain corresponds to 1-14 (MAYPFQLGFQDAAS). The helical transmembrane segment at 15 to 45 (PIMEELLHFHDHTLMIVFLISSLVLYIITLM) threads the bilayer. Residues 46–59 (LTTKLTHTSTMDAQ) lie on the Mitochondrial matrix side of the membrane. The chain crosses the membrane as a helical span at residues 60 to 87 (EVETVWTILPAIILILIALPSLRILYMM). Residues 88 to 227 (DEVNNPSLTV…VFEKWSVSML (140 aa)) lie on the Mitochondrial intermembrane side of the membrane. Cu cation is bound by residues H161, C196, E198, C200, H204, and M207. A Mg(2+)-binding site is contributed by E198.

Belongs to the cytochrome c oxidase subunit 2 family. Component of the cytochrome c oxidase (complex IV, CIV), a multisubunit enzyme composed of 14 subunits. The complex is composed of a catalytic core of 3 subunits MT-CO1, MT-CO2 and MT-CO3, encoded in the mitochondrial DNA, and 11 supernumerary subunits COX4I, COX5A, COX5B, COX6A, COX6B, COX6C, COX7A, COX7B, COX7C, COX8 and NDUFA4, which are encoded in the nuclear genome. The complex exists as a monomer or a dimer and forms supercomplexes (SCs) in the inner mitochondrial membrane with NADH-ubiquinone oxidoreductase (complex I, CI) and ubiquinol-cytochrome c oxidoreductase (cytochrome b-c1 complex, complex III, CIII), resulting in different assemblies (supercomplex SCI(1)III(2)IV(1) and megacomplex MCI(2)III(2)IV(2)). Found in a complex with TMEM177, COA6, COX18, COX20, SCO1 and SCO2. Interacts with TMEM177 in a COX20-dependent manner. Interacts with COX20. Interacts with COX16. Requires Cu cation as cofactor.

It localises to the mitochondrion inner membrane. The enzyme catalyses 4 Fe(II)-[cytochrome c] + O2 + 8 H(+)(in) = 4 Fe(III)-[cytochrome c] + 2 H2O + 4 H(+)(out). Component of the cytochrome c oxidase, the last enzyme in the mitochondrial electron transport chain which drives oxidative phosphorylation. The respiratory chain contains 3 multisubunit complexes succinate dehydrogenase (complex II, CII), ubiquinol-cytochrome c oxidoreductase (cytochrome b-c1 complex, complex III, CIII) and cytochrome c oxidase (complex IV, CIV), that cooperate to transfer electrons derived from NADH and succinate to molecular oxygen, creating an electrochemical gradient over the inner membrane that drives transmembrane transport and the ATP synthase. Cytochrome c oxidase is the component of the respiratory chain that catalyzes the reduction of oxygen to water. Electrons originating from reduced cytochrome c in the intermembrane space (IMS) are transferred via the dinuclear copper A center (CU(A)) of subunit 2 and heme A of subunit 1 to the active site in subunit 1, a binuclear center (BNC) formed by heme A3 and copper B (CU(B)). The BNC reduces molecular oxygen to 2 water molecules using 4 electrons from cytochrome c in the IMS and 4 protons from the mitochondrial matrix. The protein is Cytochrome c oxidase subunit 2 (MT-CO2) of Balaenoptera physalus (Fin whale).